The primary structure comprises 545 residues: MTRLTQSDTWQALSTHTQSLPHMRDLFEGDAQRFKTMSTSACGLFLDYSKNRATEETLSLLFKLAEDAQLQSKIAGMFNGEIINTTEKRAVLHTALRASPEQEILLDGVNIVQEVQETQQKMAEFVNAITSGQWKGYTGKRITDVVSIGIGGSFLGPKIVSQALRPYWTGELNCHFVANVDATSICEKLKTLDAETTLFIMSSKSFGTQETLTNTLSAKDWFLKQGGSQLDVAKHFVAVTSNVPKATEFGIDAENIFPMWDWVGGRYSLWSAIGLPIALLIGMDNFKALLQGAHEMDKHFLEAPLTENMPVIMGLFSLLYGNFHGAQSHVVLTYDHYLRGLPAYFQQLDMESNGKSVTLDGTDVDFSTGPVIWGGEGTNGQHAYHQLIHQGTALIPADFIMPLQSHNPLGEHHIQLASNCFGQTQALMQGRNYDEALNELSGSKLSADEQALIAKHKVMPGNKPSNTILMDKLTPSTLGSLIALYEHRTFVQGAIWDINSFDQWGVELGKSLGNDVLERLSADSDATSLDSSSNGLINMFRQGKI.

Residue Glu351 is the Proton donor of the active site. Residues His382 and Lys510 contribute to the active site.

This sequence belongs to the GPI family.

The protein resides in the cytoplasm. The catalysed reaction is alpha-D-glucose 6-phosphate = beta-D-fructose 6-phosphate. It participates in carbohydrate biosynthesis; gluconeogenesis. Its pathway is carbohydrate degradation; glycolysis; D-glyceraldehyde 3-phosphate and glycerone phosphate from D-glucose: step 2/4. Its function is as follows. Catalyzes the reversible isomerization of glucose-6-phosphate to fructose-6-phosphate. The protein is Glucose-6-phosphate isomerase of Shewanella woodyi (strain ATCC 51908 / MS32).